The following is a 569-amino-acid chain: Urease subunit alpha (569 aa).

Positions 131 to 569 constitute a Urease domain; that stretch reads GSIDTHIHFI…VPMAQRYFLL (439 aa). Ni(2+) contacts are provided by histidine 136, histidine 138, and lysine 219. At lysine 219 the chain carries N6-carboxylysine. Histidine 221 is a substrate binding site. Residues histidine 248 and histidine 274 each coordinate Ni(2+). The active-site Proton donor is the histidine 322. Residue aspartate 362 participates in Ni(2+) binding.

It belongs to the metallo-dependent hydrolases superfamily. Urease alpha subunit family. In terms of assembly, heterotrimer of UreA (gamma), UreB (beta) and UreC (alpha) subunits. Three heterotrimers associate to form the active enzyme. Requires Ni cation as cofactor. Carboxylation allows a single lysine to coordinate two nickel ions.

It localises to the cytoplasm. The enzyme catalyses urea + 2 H2O + H(+) = hydrogencarbonate + 2 NH4(+). It participates in nitrogen metabolism; urea degradation; CO(2) and NH(3) from urea (urease route): step 1/1. This is Urease subunit alpha from Prochlorococcus marinus (strain AS9601).